Reading from the N-terminus, the 501-residue chain is Uridine kinase (501 aa).

At Ser17 the chain carries Phosphoserine. 63–70 (GASGSGKT) serves as a coordination point for ATP. Ser276 bears the Phosphoserine mark.

This sequence belongs to the uridine kinase family.

The protein resides in the cytoplasm. It localises to the nucleus. The enzyme catalyses uridine + ATP = UMP + ADP + H(+). It carries out the reaction cytidine + ATP = CMP + ADP + H(+). It participates in pyrimidine metabolism; CTP biosynthesis via salvage pathway; CTP from cytidine: step 1/3. The protein operates within pyrimidine metabolism; UMP biosynthesis via salvage pathway; UMP from uridine: step 1/1. Its function is as follows. Catalyzes the conversion of uridine into UMP and cytidine into CMP in the pyrimidine salvage pathway. The protein is Uridine kinase (URK1) of Saccharomyces cerevisiae (strain ATCC 204508 / S288c) (Baker's yeast).